A 508-amino-acid chain; its full sequence is GMP synthase [glutamine-hydrolyzing] (508 aa).

The Glutamine amidotransferase type-1 domain maps to 1 to 189 (MILVLDFGSQ…ALLVCDCEKT (189 aa)). The active-site Nucleophile is cysteine 78. Residues histidine 163 and glutamate 165 contribute to the active site. In terms of domain architecture, GMPS ATP-PPase spans 190-383 (WGMQHFAQRE…LGISQDFLMR (194 aa)). 217-223 (SGGVDST) is an ATP binding site.

Homodimer.

The catalysed reaction is XMP + L-glutamine + ATP + H2O = GMP + L-glutamate + AMP + diphosphate + 2 H(+). Its pathway is purine metabolism; GMP biosynthesis; GMP from XMP (L-Gln route): step 1/1. Catalyzes the synthesis of GMP from XMP. This Helicobacter pylori (strain HPAG1) protein is GMP synthase [glutamine-hydrolyzing].